We begin with the raw amino-acid sequence, 263 residues long: MLSRKLSPEQLVARRLKIRDWNHKIGAVVAPHYSPTLSIRNPAPPSQLSLPLLLSSGAHLGHSTSIWNPYTQPFIYGKREGIHIISLDQTMVYLRRAISVVRSIAKENGIILFIGTRNGQKDSVVAAAKRARGYHIFDRWLPGLLTNAREVQGKLGGSILCKDNRGKLIQTDKKPSYVFPDLMVILNPLENKSACLEAQKTHVPTIGIIDTDADPRMVTYPIPANDDSLRCTDLIAGLLSRVAEQEYQKANQAFEKDKFTLPL.

The N-terminal 15 residues, 1-15 (MLSRKLSPEQLVARR), are a transit peptide targeting the mitochondrion.

This sequence belongs to the universal ribosomal protein uS2 family. As to quaternary structure, component of the mitochondrial small ribosomal subunit (mt-SSU). Mature yeast 74S mitochondrial ribosomes consist of a small (37S) and a large (54S) subunit. The 37S small subunit contains a 15S ribosomal RNA (15S mt-rRNA) and at least 32 different proteins. The 54S large subunit contains a 21S rRNA (21S mt-rRNA) and at least 45 different proteins.

It is found in the mitochondrion. Its function is as follows. Component of the mitochondrial ribosome (mitoribosome), a dedicated translation machinery responsible for the synthesis of mitochondrial genome-encoded proteins, including at least some of the essential transmembrane subunits of the mitochondrial respiratory chain. The mitoribosomes are attached to the mitochondrial inner membrane and translation products are cotranslationally integrated into the membrane. This Schizosaccharomyces pombe (strain 972 / ATCC 24843) (Fission yeast) protein is Small ribosomal subunit protein uS2m.